We begin with the raw amino-acid sequence, 244 residues long: 14-3-3 protein beta/alpha-1 (244 aa).

M1 is modified (N-acetylmethionine).

This sequence belongs to the 14-3-3 family. In terms of assembly, homodimer, and heterodimer with other family members. As to expression, expressed in brain, gill, heart, intestine, kidney, liver, ovary, skin, spleen and testis.

The protein localises to the cytoplasm. In terms of biological role, adapter protein implicated in the regulation of a large spectrum of both general and specialized signaling pathways. Binds to a large number of partners, usually by recognition of a phosphoserine or phosphothreonine motif. Binding generally results in the modulation of the activity of the binding partner. The polypeptide is 14-3-3 protein beta/alpha-1 (Oncorhynchus mykiss (Rainbow trout)).